The chain runs to 491 residues: Serralysin (491 aa).

A propeptide spanning residues 1-16 (MGSFLLKKAVGLSNIS) is cleaved from the precursor. Histidine 186 is a binding site for Zn(2+). Glutamate 187 is an active-site residue. 3 residues coordinate Zn(2+): histidine 190, histidine 196, and tyrosine 226. 27 residues coordinate Ca(2+): arginine 263, glycine 265, aspartate 295, glycine 297, glycine 298, aspartate 300, threonine 337, glutamate 339, glycine 344, glycine 346, aspartate 348, asparagine 353, alanine 355, asparagine 357, glycine 361, glycine 362, glycine 364, aspartate 366, glycine 370, glycine 373, aspartate 384, glycine 388, glycine 389, glycine 391, aspartate 402, aspartate 409, and aspartate 419. Hemolysin-type calcium-binding repeat units lie at residues 342-359 (IGGFGNDIIHGNDADNTL), 360-377 (IGGEGDDIIYGHSGNNTI), and 378-395 (YGGRGQDTLHGGTGSNTF).

It belongs to the peptidase M10B family. Ca(2+) is required as a cofactor. It depends on Zn(2+) as a cofactor.

The protein localises to the secreted. It catalyses the reaction Preferential cleavage of bonds with hydrophobic residues in P1'.. Its activity is regulated as follows. Ca(2+) increases protease activity. In terms of biological role, one of the virulence factors produced during swarmer cell differentiation of the bacteria, which seems to be associated with pathogenesis. The protease activity is limited to IgA1, IgA2, as well as IgG degradation. This is Serralysin (zapA) from Proteus mirabilis.